A 429-amino-acid chain; its full sequence is CinA-like protein (429 aa).

Belongs to the CinA family.

In Chlorobium limicola (strain DSM 245 / NBRC 103803 / 6330), this protein is CinA-like protein.